A 119-amino-acid polypeptide reads, in one-letter code: UPF0102 protein Sare_1228 (119 aa).

The protein belongs to the UPF0102 family.

The protein is UPF0102 protein Sare_1228 of Salinispora arenicola (strain CNS-205).